Consider the following 535-residue polypeptide: Flavin-containing monooxygenase 1 (535 aa).

At Ala-2 the chain carries N-acetylalanine. Residues 2–513 are Lumenal-facing; it reads AKRVAIVGAG…TRIVQESSSP (512 aa). FAD contacts are provided by residues 9–13, Glu-32, 40–41, and 61–62; these read GAGVS, LW, and NS. Residues 60–61 and 195–198 each bind NADP(+); these read SN and SGTD. Residues 514 to 534 form a helical membrane-spanning segment; that stretch reads FESLLKLFAVLALLVSVFLIF. Residue Leu-535 is a topological domain, cytoplasmic.

This sequence belongs to the FMO family. It depends on FAD as a cofactor. Liver.

The protein resides in the endoplasmic reticulum membrane. The catalysed reaction is hypotaurine + NADPH + O2 + H(+) = taurine + NADP(+) + H2O. It catalyses the reaction hypotaurine + NADH + O2 + H(+) = taurine + NAD(+) + H2O. It carries out the reaction trimethylamine + NADPH + O2 = trimethylamine N-oxide + NADP(+) + H2O. The enzyme catalyses N,N-dimethylaniline + NADPH + O2 + H(+) = N,N-dimethylaniline N-oxide + NADP(+) + H2O. Functionally, broad spectrum monooxygenase that catalyzes the oxygenation of a wide variety of nitrogen- and sulfur-containing compounds including xenobiotics. Catalyzes the S-oxygenation of hypotaurine to produce taurine, an organic osmolyte involved in cell volume regulation as well as a variety of cytoprotective and developmental processes. In vitro, catalyzes the N-oxygenation of trimethylamine (TMA) to produce trimethylamine N-oxide (TMAO) and could therefore participate to the detoxification of this compound that is generated by the action of gut microbiota from dietary precursors such as choline, choline containing compounds, betaine or L-carnitine. The polypeptide is Flavin-containing monooxygenase 1 (FMO1) (Oryctolagus cuniculus (Rabbit)).